Reading from the N-terminus, the 330-residue chain is Ketol-acid reductoisomerase (NADP(+)) (330 aa).

One can recognise a KARI N-terminal Rossmann domain in the interval I2–T182. NADP(+) is bound by residues Y25–Q28, R48, S51, S53, and D83–Q86. The active site involves H108. G134 serves as a coordination point for NADP(+). Positions T183–I328 constitute a KARI C-terminal knotted domain. Positions 191, 195, 227, and 231 each coordinate Mg(2+). A substrate-binding site is contributed by S252.

Belongs to the ketol-acid reductoisomerase family. Requires Mg(2+) as cofactor.

The enzyme catalyses (2R)-2,3-dihydroxy-3-methylbutanoate + NADP(+) = (2S)-2-acetolactate + NADPH + H(+). It carries out the reaction (2R,3R)-2,3-dihydroxy-3-methylpentanoate + NADP(+) = (S)-2-ethyl-2-hydroxy-3-oxobutanoate + NADPH + H(+). Its pathway is amino-acid biosynthesis; L-isoleucine biosynthesis; L-isoleucine from 2-oxobutanoate: step 2/4. The protein operates within amino-acid biosynthesis; L-valine biosynthesis; L-valine from pyruvate: step 2/4. Involved in the biosynthesis of branched-chain amino acids (BCAA). Catalyzes an alkyl-migration followed by a ketol-acid reduction of (S)-2-acetolactate (S2AL) to yield (R)-2,3-dihydroxy-isovalerate. In the isomerase reaction, S2AL is rearranged via a Mg-dependent methyl migration to produce 3-hydroxy-3-methyl-2-ketobutyrate (HMKB). In the reductase reaction, this 2-ketoacid undergoes a metal-dependent reduction by NADPH to yield (R)-2,3-dihydroxy-isovalerate. This is Ketol-acid reductoisomerase (NADP(+)) from Halothermothrix orenii (strain H 168 / OCM 544 / DSM 9562).